The chain runs to 387 residues: 3-ketoacyl-CoA thiolase (387 aa).

Cys91 serves as the catalytic Acyl-thioester intermediate. Active-site proton acceptor residues include His343 and Cys373.

It belongs to the thiolase-like superfamily. Thiolase family. As to quaternary structure, heterotetramer of two alpha chains (FadB) and two beta chains (FadA).

The protein resides in the cytoplasm. The catalysed reaction is an acyl-CoA + acetyl-CoA = a 3-oxoacyl-CoA + CoA. Its pathway is lipid metabolism; fatty acid beta-oxidation. Its function is as follows. Catalyzes the final step of fatty acid oxidation in which acetyl-CoA is released and the CoA ester of a fatty acid two carbons shorter is formed. The chain is 3-ketoacyl-CoA thiolase from Shewanella loihica (strain ATCC BAA-1088 / PV-4).